The chain runs to 598 residues: Nicotinamide riboside transporter 1 (598 aa).

The next 11 helical transmembrane spans lie at 48–68, 71–91, 112–132, 174–194, 197–217, 241–261, 273–293, 372–392, 395–415, 447–467, and 484–504; these read LAYW…SAAL, GLSY…TIIF, FVFG…MSIV, LVGF…KPYH, YLLI…VIYL, AWAW…GSTN, LAIW…VPIF, GALF…YNSS, FLTV…VMIC, AIVA…WEVN, and SFFS…FFPF. S560 and S572 each carry phosphoserine.

Belongs to the purine-cytosine permease (2.A.39) family.

The protein localises to the cell membrane. High-affinity pH-dependent nicotinamide riboside transporter which also transports thiamine with low affinity. Involved in 5-fluorocytosine sensitivity. In Saccharomyces cerevisiae (strain ATCC 204508 / S288c) (Baker's yeast), this protein is Nicotinamide riboside transporter 1 (NRT1).